The sequence spans 144 residues: uncharacterized protein (144 aa).

Residues 125 to 135 are compositionally biased toward polar residues; the sequence is PQQQNNHQLQS. Residues 125-144 form a disordered region; that stretch reads PQQQNNHQLQSKPKAASISR.

This is an uncharacterized protein from Rickettsia prowazekii (strain Madrid E).